Here is a 100-residue protein sequence, read N- to C-terminus: Small ribosomal subunit protein uS14c (100 aa).

The protein belongs to the universal ribosomal protein uS14 family. In terms of assembly, part of the 30S ribosomal subunit.

Its subcellular location is the plastid. The protein localises to the chloroplast. In terms of biological role, binds 16S rRNA, required for the assembly of 30S particles. The sequence is that of Small ribosomal subunit protein uS14c from Cicer arietinum (Chickpea).